Consider the following 205-residue polypeptide: Colicin-E8 (205 aa).

Disordered regions lie at residues 24–109 (AQTD…PDRI) and 136–187 (PELS…VYDM). Basic and acidic residues-rich tracts occupy residues 53-76 (QERR…ESKR), 88-99 (PVGDKWLDDAGK), and 159-178 (RNKD…DKPI). Positions 173, 198, and 202 each coordinate Zn(2+).

The protein belongs to the colicin/pyosin nuclease family.

This plasmid-coded bactericidal protein is an endonuclease active on both single- and double-stranded DNA but with undefined specificity. Functionally, colicins are polypeptide toxins produced by and active against E.coli and closely related bacteria. The protein is Colicin-E8 (col) of Escherichia coli.